The primary structure comprises 126 residues: Glycine cleavage system H protein (126 aa).

The 82-residue stretch at 24 to 105 (TLTVGITDHA…AYGVWLFKLK (82 aa)) folds into the Lipoyl-binding domain. Lysine 65 carries the post-translational modification N6-lipoyllysine.

This sequence belongs to the GcvH family. The glycine cleavage system is composed of four proteins: P, T, L and H. The cofactor is (R)-lipoate.

The glycine cleavage system catalyzes the degradation of glycine. The H protein shuttles the methylamine group of glycine from the P protein to the T protein. The polypeptide is Glycine cleavage system H protein (Burkholderia vietnamiensis (strain G4 / LMG 22486) (Burkholderia cepacia (strain R1808))).